The following is a 1437-amino-acid chain: uncharacterized protein (1437 aa).

Residues 1–25 (MRRGCRHHLAAVVLLIATFPPLAYN) form the signal peptide. Residues 26–1326 (QNIGGINQNI…SRIKENYFKW (1301 aa)) are Extracellular-facing. N103, N315, N364, N492, N605, N676, and N914 each carry an N-linked (GlcNAc...) asparagine glycan. An NIDO domain is found at 193 to 356 (AFFGQQASQA…GRYMFRVDDV (164 aa)). In terms of domain architecture, AMOP spans 648–829 (VKEKSREMCH…FRCQMFYWRR (182 aa)). A helical transmembrane segment spans residues 1327-1347 (LAVIAGIVGIIIVILLIFLVF). The Cytoplasmic segment spans residues 1348–1437 (WCIKRKKLQE…QGMLGLNTSV (90 aa)). The interval 1394-1419 (PRTVAMPPPRGTTATPMTLEPRGFSP) is disordered.

It localises to the membrane. This is an uncharacterized protein from Caenorhabditis elegans.